The following is a 65-amino-acid chain: Cytochrome b-c1 complex subunit 9, mitochondrial (65 aa).

A helical membrane pass occupies residues 14-34; that stretch reads IYVATIFGGAFAFQGFFDVAV.

This sequence belongs to the UQCR10/QCR9 family. Component of the ubiquinol-cytochrome c oxidoreductase (cytochrome b-c1 complex, complex III, CIII), a multisubunit enzyme composed of 10 subunits. The complex is composed of 3 respiratory subunits cytochrome b (COB), cytochrome c1 (CYT1) and Rieske protein (RIP1), 2 core protein subunits COR1 and QCR2, and 5 low-molecular weight protein subunits QCR6, QCR7, QCR8, QCR9 and QCR10. The complex exists as an obligatory dimer and forms supercomplexes (SCs) in the inner mitochondrial membrane with a monomer or a dimer of cytochrome c oxidase (complex IV, CIV), resulting in 2 different assemblies (supercomplexes III(2)IV and III(2)IV(2)).

Its subcellular location is the membrane. It is found in the mitochondrion inner membrane. In terms of biological role, component of the ubiquinol-cytochrome c oxidoreductase, a multisubunit transmembrane complex that is part of the mitochondrial electron transport chain which drives oxidative phosphorylation. The complex plays an important role in the uptake of multiple carbon sources present in different host niches. The polypeptide is Cytochrome b-c1 complex subunit 9, mitochondrial (Candida albicans (strain SC5314 / ATCC MYA-2876) (Yeast)).